The following is a 76-amino-acid chain: Conotoxin VnMEKL-021 (76 aa).

The signal sequence occupies residues 1-19 (MQKLTILLLVAAVLMSTQA). Residues 20–37 (LIKGGGEKRPKEKIKFLS) constitute a propeptide that is removed on maturation. Cystine bridges form between cysteine 51–cysteine 65, cysteine 58–cysteine 69, and cysteine 64–cysteine 73.

This sequence belongs to the conotoxin O2 superfamily. In terms of tissue distribution, expressed by the venom duct.

It localises to the secreted. The sequence is that of Conotoxin VnMEKL-021 from Conus ventricosus (Mediterranean cone).